We begin with the raw amino-acid sequence, 272 residues long: Glutamate racemase (272 aa).

Residues 9–10 (DS) and 41–42 (YG) each bind substrate. Cysteine 73 functions as the Proton donor/acceptor in the catalytic mechanism. Substrate is bound at residue 74–75 (NT). Cysteine 183 functions as the Proton donor/acceptor in the catalytic mechanism. 184-185 (TH) lines the substrate pocket.

This sequence belongs to the aspartate/glutamate racemases family.

The enzyme catalyses L-glutamate = D-glutamate. Its pathway is cell wall biogenesis; peptidoglycan biosynthesis. Its function is as follows. Provides the (R)-glutamate required for cell wall biosynthesis. This is Glutamate racemase from Shewanella sp. (strain MR-4).